Here is a 449-residue protein sequence, read N- to C-terminus: tRNA modification GTPase MnmE (449 aa).

3 residues coordinate (6S)-5-formyl-5,6,7,8-tetrahydrofolate: R24, E81, and K121. The TrmE-type G domain occupies 218–375; that stretch reads GLVVAITGPP…LIAALGKFAA (158 aa). GTP contacts are provided by residues 228–233, 247–253, and 272–275; these read NVGKST, SPHAGTT, and DTAG. Mg(2+) is bound by residues S232 and T253. K449 provides a ligand contact to (6S)-5-formyl-5,6,7,8-tetrahydrofolate.

It belongs to the TRAFAC class TrmE-Era-EngA-EngB-Septin-like GTPase superfamily. TrmE GTPase family. In terms of assembly, homodimer. Heterotetramer of two MnmE and two MnmG subunits. Requires K(+) as cofactor.

It localises to the cytoplasm. Its function is as follows. Exhibits a very high intrinsic GTPase hydrolysis rate. Involved in the addition of a carboxymethylaminomethyl (cmnm) group at the wobble position (U34) of certain tRNAs, forming tRNA-cmnm(5)s(2)U34. This chain is tRNA modification GTPase MnmE, found in Rhodopseudomonas palustris (strain BisB18).